A 144-amino-acid polypeptide reads, in one-letter code: F420-non-reducing hydrogenase vhc iron-sulfur subunit D (144 aa).

Belongs to the MvhD/VhuD family. As to quaternary structure, the F420-non-reducing hydrogenase vhc is composed of three subunits; VhcA, VhcD and VhcG. It depends on [2Fe-2S] cluster as a cofactor.

The polypeptide is F420-non-reducing hydrogenase vhc iron-sulfur subunit D (vhcD) (Methanococcus voltae).